The sequence spans 848 residues: Aryl hydrocarbon receptor (848 aa).

A propeptide spanning residues 1–9 is cleaved from the precursor; sequence MSSGANITY. The segment at 1–38 is disordered; sequence MSSGANITYASRKRRKPVQKTVKPIPAEGIKSNPSKRH. 2 consecutive short sequence motifs (nuclear localization signal) follow at residues 12–15 and 36–41; these read RKRR and KRHRDR. The 54-residue stretch at 26–79 folds into the bHLH domain; that stretch reads PAEGIKSNPSKRHRDRLNTELDRLASLLPFPQDVINKLDKLSVLRLSVSYLRAK. The interval 37 to 65 is DNA-binding; that stretch reads RHRDRLNTELDRLASLLPFPQDVINKLDK. 3 required for maintaining the overall integrity of the AHR:ARNT heterodimer and its transcriptional activity regions span residues 49–81, 116–124, and 260–262; these read LASL…AKSF, LLQALNGFV, and FAI. The short motif at 63–71 is the Nuclear export signal element; it reads LDKLSVLRL. The 64-residue stretch at 116 to 179 folds into the PAS 1 domain; the sequence is LLQALNGFVL…RQLHWALNPD (64 aa). A PAS 2 domain is found at 269 to 336; that stretch reads PSILEIRTKN…CAESHIRMIK (68 aa). The 39-residue stretch at 342–380 folds into the PAC domain; that stretch reads MTVFRLFAKHSRWRWVQSNARLIYRNGRPDYIIATQRPL. Positions 421–449 are disordered; it reads LPIRTKSNTSRKDWAPQSTPSKDSFHPSS. Residues 436–449 show a composition bias toward polar residues; it reads PQSTPSKDSFHPSS.

As to quaternary structure, homodimer. Heterodimer; efficient DNA binding requires dimerization with another bHLH protein. Interacts with ARNT; the heterodimer ARNT:AHR binds to core DNA sequence 5'-TGCGTG-3' within the dioxin response element (DRE) of target gene promoters and activates their transcription. Binds MYBBP1A. Interacts with coactivators including SRC-1, RIP140 and NOCA7, and with the corepressor SMRT. Interacts with NEDD8 and IVNS1ABP. Interacts with BMAL1. Interacts with HSP90AB1. Interacts with TIPARP; leading to mono-ADP-ribosylation of AHR and subsequent inhibition of AHR. Mono-ADP-ribosylated, leading to inhibit transcription activator activity of AHR. Expressed in all tissues tested including brain, heart, kidney, liver, lung, muscle, ovary, skin, spleen and thymus.

The protein localises to the cytoplasm. The protein resides in the nucleus. Ligand-activated transcription factor that enables cells to adapt to changing conditions by sensing compounds from the environment, diet, microbiome and cellular metabolism, and which plays important roles in development, immunity and cancer. Upon ligand binding, translocates into the nucleus, where it heterodimerizes with ARNT and induces transcription by binding to xenobiotic response elements (XRE). Regulates a variety of biological processes, including angiogenesis, hematopoiesis, drug and lipid metabolism, cell motility and immune modulation. Xenobiotics can act as ligands: upon xenobiotic-binding, activates the expression of multiple phase I and II xenobiotic chemical metabolizing enzyme genes (such as the CYP1A1 gene). Mediates biochemical and toxic effects of halogenated aromatic hydrocarbons. Next to xenobiotics, natural ligands derived from plants, microbiota, and endogenous metabolism are potent AHR agonists. Tryptophan (Trp) derivatives constitute an important class of endogenous AHR ligands. Acts as a negative regulator of anti-tumor immunity: indoles and kynurenic acid generated by Trp catabolism act as ligand and activate AHR, thereby promoting AHR-driven cancer cell motility and suppressing adaptive immunity. Regulates the circadian clock by inhibiting the basal and circadian expression of the core circadian component PER1. Inhibits PER1 by repressing the CLOCK-BMAL1 heterodimer mediated transcriptional activation of PER1. The heterodimer ARNT:AHR binds to core DNA sequence 5'-TGCGTG-3' within the dioxin response element (DRE) of target gene promoters and activates their transcription. The sequence is that of Aryl hydrocarbon receptor (Ahr) from Mus musculus (Mouse).